A 405-amino-acid polypeptide reads, in one-letter code: Imidazolonepropionase (405 aa).

Residues His70 and His72 each contribute to the Fe(3+) site. Residues His70 and His72 each contribute to the Zn(2+) site. 4-imidazolone-5-propanoate contacts are provided by Arg79, Tyr142, and His175. Tyr142 lines the N-formimidoyl-L-glutamate pocket. His240 is a binding site for Fe(3+). His240 is a binding site for Zn(2+). Gln243 contributes to the 4-imidazolone-5-propanoate binding site. Fe(3+) is bound at residue Asp315. Asp315 lines the Zn(2+) pocket. N-formimidoyl-L-glutamate-binding residues include Asn317 and Gly319. Thr320 contributes to the 4-imidazolone-5-propanoate binding site.

This sequence belongs to the metallo-dependent hydrolases superfamily. HutI family. The cofactor is Zn(2+). Fe(3+) is required as a cofactor.

The protein resides in the cytoplasm. The enzyme catalyses 4-imidazolone-5-propanoate + H2O = N-formimidoyl-L-glutamate. It participates in amino-acid degradation; L-histidine degradation into L-glutamate; N-formimidoyl-L-glutamate from L-histidine: step 3/3. In terms of biological role, catalyzes the hydrolytic cleavage of the carbon-nitrogen bond in imidazolone-5-propanoate to yield N-formimidoyl-L-glutamate. It is the third step in the universal histidine degradation pathway. The chain is Imidazolonepropionase from Ectopseudomonas mendocina (strain ymp) (Pseudomonas mendocina).